We begin with the raw amino-acid sequence, 243 residues long: DNA repair protein RecO (243 aa).

Belongs to the RecO family.

Involved in DNA repair and RecF pathway recombination. The protein is DNA repair protein RecO of Frankia casuarinae (strain DSM 45818 / CECT 9043 / HFP020203 / CcI3).